The chain runs to 93 residues: Parbolysin P1 (93 aa).

Cystine bridges form between cysteine 16/cysteine 37, cysteine 22/cysteine 33, and cysteine 47/cysteine 60.

Belongs to the worm cytolysin family. As to expression, localized within the skin and proboscis and are most readily isolated from body mucus secretions.

The protein localises to the secreted. In terms of biological role, cytolysin that shows hemolytic activity (on bovine erythrocytes, HC(50)=5.75 mg/ml). This hemolytic activity is completely inhibited by small unilamelar vesicles composed of PC/PG, PC/PI and PC/PS in 1:1 molar ratios (with at least 100 mg/ml concentration). The recombinant protein does not show hemolytic activity, suggesting that it is not properly folded or that it requires a free N-terminal end for its activity. This Parborlasia corrugatus (Antarctic nemertean worm) protein is Parbolysin P1.